Reading from the N-terminus, the 88-residue chain is MSTSTTFQIHYFASASTYTGKQTERLPAPLPLPQLFDTLESMYPGIKEKVLTSCGVSLGDEYVDVEADIQVMIHPGDEVAVIPPVSSG.

Position 88 is a 1-thioglycine; alternate (G88). At G88 the chain carries Glycyl adenylate; alternate.

The protein belongs to the MoaD family. MOCS2A subfamily. As to quaternary structure, heterotetramer; composed of 2 small (MOCS2A) and 2 large (MOCS2B) subunits. Post-translationally, C-terminal thiocarboxylation occurs in 2 steps, it is first acyl-adenylated (-COAMP) via the hesA/moeB/thiF part of uba4, then thiocarboxylated (-COSH) via the rhodanese domain of uba4.

Its subcellular location is the cytoplasm. Its pathway is cofactor biosynthesis; molybdopterin biosynthesis. In terms of biological role, acts as a sulfur carrier required for molybdopterin biosynthesis. Component of the molybdopterin synthase complex that catalyzes the conversion of precursor Z into molybdopterin by mediating the incorporation of 2 sulfur atoms into precursor Z to generate a dithiolene group. In the complex, serves as sulfur donor by being thiocarboxylated (-COSH) at its C-terminus by uba4. After interaction with MOCS2B, the sulfur is then transferred to precursor Z to form molybdopterin. The chain is Molybdopterin synthase sulfur carrier subunit from Aspergillus niger (strain ATCC MYA-4892 / CBS 513.88 / FGSC A1513).